Consider the following 1083-residue polypeptide: DNA primase (1083 aa).

The segment at 1022–1061 (CLRYPHRGGRTAPRTFVSLRVDHHNRLCISLAQQCFATKC) adopts a CHC2-type zinc-finger fold.

Belongs to the herpesviridae DNA primase family. Associates with the helicase and the primase-associated factor to form the helicase-primase factor.

The protein resides in the host nucleus. Functionally, essential component of the helicase/primase complex. Unwinds the DNA at the replication forks and generates single-stranded DNA for both leading and lagging strand synthesis. The primase initiates primer synthesis and thereby produces large amount of short RNA primers on the lagging strand that the polymerase elongates using dNTPs. In Homo sapiens (Human), this protein is DNA primase.